A 160-amino-acid chain; its full sequence is RTX-II toxin-activating lysine-acyltransferase ApxIIC (160 aa).

Residues His-23 and Asp-92 contribute to the active site.

This sequence belongs to the RTX toxin acyltransferase family. In terms of assembly, homodimer.

It localises to the cytoplasm. It catalyses the reaction a fatty acyl-[ACP] + L-lysyl-[protein] = N(6)-(fatty acyl)-L-lysyl-[protein] + holo-[ACP] + H(+). Protein-lysine acyltransferase that catalyzes fatty acylation of the protoxin, thereby converting it to the active toxin. This is RTX-II toxin-activating lysine-acyltransferase ApxIIC (apxIIC) from Actinobacillus pleuropneumoniae (Haemophilus pleuropneumoniae).